The sequence spans 1294 residues: Unconventional myosin-VI (1294 aa).

The Myosin N-terminal SH3-like domain occupies 2–53 (EDGKPVWAPHPTDGFQMGNIVDIGPDSLTIEPLNQKGKTFLALINQVFPAEE). Residues 57-771 (KDVEDNCSLM…KFAEFDQIMK (715 aa)) form the Myosin motor domain. 151-158 (GESGAGKT) is an ATP binding site. Serine 267 carries the phosphoserine modification. Residues 273-317 (YLNRGCTRYFANKETDKQILQNRKSPEYLKAGSMKDPLLDDHGDF) are responsible for slow ATPase activity. Threonine 405 is subject to Phosphothreonine. At serine 604 the chain carries Phosphoserine. The actin-binding stretch occupies residues 665–672 (FIRCIKPN). The interval 782 to 810 (KRVNHWLTCSRWKKVQWCSLSVIKLKNKI) is required for binding calmodulin. The IQ domain occupies 814-834 (AEACIKMQKTIRMWLCKRRHK). Positions 835 to 916 (PRIDGLVKVG…EELLSALQKK (82 aa)) are three-helix bundle. Residues 917–984 (KQQEEEAERL…EDDEKRIQAE (68 aa)) form an SAH region. A disordered region spans residues 934–955 (EKERKRREEDEKRRRKEEEERR). A Phosphoserine modification is found at serine 1025. Residues 1060 to 1285 (KEMSEFLSRG…ESRQARPTYA (226 aa)) are interaction with TAX1BP1 and CALCOCO2/NDP52. The segment at 1116 to 1118 (RRL) is interaction with OPTN. At serine 1155 the chain carries Phosphoserine. An interaction with TOM1 region spans residues 1157 to 1285 (QQNPAAQIPA…ESRQARPTYA (129 aa)).

This sequence belongs to the TRAFAC class myosin-kinesin ATPase superfamily. Myosin family. In terms of assembly, homodimer; dimerization seems to implicate the unfolding of the three-helix bundle region creating an additional calmodulin binding site, and cargo binding. Able to function as a monomer under specific conditions in vitro. Forms a complex with CFTR and DAB2 in the apical membrane of epithelial cells. Component of the DISP/DOCK7-induced septin displacement complex, at least composed of DOCK7, LRCH3 and MYO6. Binding to calmodulin through a unique insert, not found in other myosins, located in the neck region between the motor domain and the IQ domain appears to contribute to the directionality reversal. This interaction occurs only if the C-terminal lobe of calmodulin is occupied by calcium. Interaction with F-actin/ACTN1 occurs only at the apical brush border domain of the proximal tubule cells. Interacts with DAB2. In vitro, the C-terminal globular tail binds a C-terminal region of DAB2. Interacts with CFTR. Interacts with CABP5. Interacts with TOM1. Interacts with OPTN. Interacts with TAX1BP1 and CALCOCO2/NDP52. Interacts with TOM1L2. Interacts with CLIC5; may work together in a complex which also includes RDX and MYO6 to stabilize linkages between the plasma membrane and subjacent actin cytoskeleton at the base of stereocilia. Phosphorylation in the motor domain, induced by EGF, results in translocation of MYO6 from the cell surface to membrane ruffles and affects F-actin dynamics. Phosphorylated in vitro by p21-activated kinase (PAK). In terms of tissue distribution, expressed in most tissues examined including heart, brain, placenta, pancreas, spleen, thymus, prostate, testis, ovary, small intestine and colon. Highest levels in brain, pancreas, testis and small intestine. Also expressed in fetal brain and cochlea. Isoform 1 and isoform 2, containing the small insert, and isoform 4, containing neither insert, are expressed in unpolarized epithelial cells.

It localises to the golgi apparatus. The protein localises to the trans-Golgi network membrane. Its subcellular location is the nucleus. The protein resides in the cytoplasm. It is found in the perinuclear region. It localises to the membrane. The protein localises to the clathrin-coated pit. Its subcellular location is the cytoplasmic vesicle. The protein resides in the clathrin-coated vesicle. It is found in the cell projection. It localises to the filopodium. The protein localises to the ruffle membrane. Its subcellular location is the microvillus. The protein resides in the cytosol. It is found in the autophagosome. It localises to the endosome. The protein localises to the clathrin-coated vesicle membrane. In terms of biological role, myosins are actin-based motor molecules with ATPase activity. Unconventional myosins serve in intracellular movements. Myosin 6 is a reverse-direction motor protein that moves towards the minus-end of actin filaments. Has slow rate of actin-activated ADP release due to weak ATP binding. Functions in a variety of intracellular processes such as vesicular membrane trafficking and cell migration. Required for the structural integrity of the Golgi apparatus via the p53-dependent pro-survival pathway. Appears to be involved in a very early step of clathrin-mediated endocytosis in polarized epithelial cells. Together with TOM1, mediates delivery of endocytic cargo to autophagosomes thereby promoting autophagosome maturation and driving fusion with lysosomes. Links TOM1 with autophagy receptors, such as TAX1BP1; CALCOCO2/NDP52 and OPTN. May act as a regulator of F-actin dynamics. As part of the DISP complex, may regulate the association of septins with actin and thereby regulate the actin cytoskeleton. May play a role in transporting DAB2 from the plasma membrane to specific cellular targets. May play a role in the extension and network organization of neurites. Required for structural integrity of inner ear hair cells. Required for the correct localization of CLIC5 and RDX at the stereocilium base. Modulates RNA polymerase II-dependent transcription. The chain is Unconventional myosin-VI from Homo sapiens (Human).